A 263-amino-acid polypeptide reads, in one-letter code: Indolethylamine N-methyltransferase (263 aa).

Residue K13 is modified to N6-succinyllysine. S-adenosyl-L-methionine contacts are provided by residues Y20, Y25, 63 to 64 (GS), Y69, D85, and N90. K96 is modified (N6-succinyllysine). Residues 142 to 143 (DV) and L163 contribute to the S-adenosyl-L-methionine site.

It belongs to the class I-like SAM-binding methyltransferase superfamily. NNMT/PNMT/TEMT family. In terms of assembly, monomer.

Its subcellular location is the cytoplasm. It catalyses the reaction a tertiary amine + S-adenosyl-L-methionine = a methylated tertiary amine + S-adenosyl-L-homocysteine + H(+). It carries out the reaction a secondary amine + S-adenosyl-L-methionine = a methylated secondary amine + S-adenosyl-L-homocysteine + H(+). The catalysed reaction is a primary amine + S-adenosyl-L-methionine = a methylated primary amine + S-adenosyl-L-homocysteine + H(+). The enzyme catalyses dimethyl sulfide + S-adenosyl-L-methionine = trimethylsulfonium + S-adenosyl-L-homocysteine. Functionally, catalyzes the N-methylation of tryptamine and structurally related compounds. Functions as a thioether S-methyltransferase and is active with a variety of thioethers and the corresponding selenium and tellurium compounds, including 3-methylthiopropionaldehyde, dimethyl selenide, dimethyl telluride, 2-methylthioethylamine, 2-methylthioethanol, methyl-n-propyl sulfide and diethyl sulfide. Plays an important role in the detoxification of selenium compounds. The sequence is that of Indolethylamine N-methyltransferase (INMT) from Pongo abelii (Sumatran orangutan).